We begin with the raw amino-acid sequence, 518 residues long: Chromosomal replication initiator protein DnaA (518 aa).

Positions 1–72 (MTLAEFWPLC…VREELAAGRS (72 aa)) are domain I, interacts with DnaA modulators. The interval 72–180 (SAFVFKPGEG…DAEEARYEQT (109 aa)) is domain II. The tract at residues 145-172 (EPRQAAGSASRPESVAVAKARTDVQRDA) is disordered. A domain III, AAA+ region region spans residues 181–397 (NLSPDYTFDT…GAFNRVGASS (217 aa)). ATP is bound by residues glycine 225, glycine 227, lysine 228, and threonine 229. Positions 398 to 518 (RFMNRPVIDI…YEKLLILIQN (121 aa)) are domain IV, binds dsDNA.

Belongs to the DnaA family. Oligomerizes as a right-handed, spiral filament on DNA at oriC.

It is found in the cytoplasm. In terms of biological role, plays an essential role in the initiation and regulation of chromosomal replication. ATP-DnaA binds to the origin of replication (oriC) to initiate formation of the DNA replication initiation complex once per cell cycle. Binds the DnaA box (a 9 base pair repeat at the origin) and separates the double-stranded (ds)DNA. Forms a right-handed helical filament on oriC DNA; dsDNA binds to the exterior of the filament while single-stranded (ss)DNA is stabiized in the filament's interior. The ATP-DnaA-oriC complex binds and stabilizes one strand of the AT-rich DNA unwinding element (DUE), permitting loading of DNA polymerase. After initiation quickly degrades to an ADP-DnaA complex that is not apt for DNA replication. Binds acidic phospholipids. In Neisseria meningitidis serogroup B (strain ATCC BAA-335 / MC58), this protein is Chromosomal replication initiator protein DnaA.